Here is a 153-residue protein sequence, read N- to C-terminus: Large ribosomal subunit protein uL22 (153 aa).

It belongs to the universal ribosomal protein uL22 family. Part of the 50S ribosomal subunit.

Functionally, this protein binds specifically to 23S rRNA. It makes multiple contacts with different domains of the 23S rRNA in the assembled 50S subunit and ribosome. Its function is as follows. The globular domain of the protein is located near the polypeptide exit tunnel on the outside of the subunit, while an extended beta-hairpin is found that lines the wall of the exit tunnel in the center of the 70S ribosome. This is Large ribosomal subunit protein uL22 from Methanococcus aeolicus (strain ATCC BAA-1280 / DSM 17508 / OCM 812 / Nankai-3).